The chain runs to 462 residues: Glycoprotein endo-alpha-1,2-mannosidase (462 aa).

Residues 1–9 (MAKFRRRTC) lie on the Cytoplasmic side of the membrane. Residues 10 to 30 (IILSLFIVFIFSLMMGLKMLW) traverse the membrane as a helical; Signal-anchor for type II membrane protein segment. Residues 31 to 462 (PNAASFGPPF…YALDQQLPAS (432 aa)) are Lumenal-facing. The segment at 60–462 (DFQRSDRIDM…YALDQQLPAS (403 aa)) is catalytic.

The protein belongs to the glycosyl hydrolase 99 family. Post-translationally, undergoes proteolytic cleavage in the C-terminal region. As to expression, highly expressed in the liver and kidney.

The protein localises to the golgi apparatus membrane. The catalysed reaction is N-{alpha-Glc-(1-&gt;3)-alpha-Man-(1-&gt;2)-alpha-Man-(1-&gt;2)-alpha-Man-(1-&gt;3)-[alpha-Man-(1-&gt;2)-alpha-Man-(1-&gt;3)-[alpha-Man-(1-&gt;2)-alpha-Man-(1-&gt;6)]-alpha-Man-(1-&gt;6)]-beta-Man-(1-&gt;4)-beta-GlcNAc-(1-&gt;4)-beta-GlcNAc}-L-asparaginyl-[protein] + H2O = alpha-D-glucosyl-(1-&gt;3)-D-mannopyranose + N(4)-{alpha-D-Man-(1-&gt;2)-alpha-D-Man-(1-&gt;3)-[alpha-D-Man-(1-&gt;2)-alpha-D-Man-(1-&gt;3)-[alpha-D-Man-(1-&gt;2)-alpha-D-Man-(1-&gt;6)]-alpha-D-Man-(1-&gt;6)]-beta-D-Man-(1-&gt;4)-beta-D-GlaNAc-(1-&gt;4)-beta-D-GlcNAc}-L-asparaginyl-[protein] (N-glucan mannose isomer 8A1,2,3B1,2). In Rattus norvegicus (Rat), this protein is Glycoprotein endo-alpha-1,2-mannosidase (Manea).